A 136-amino-acid chain; its full sequence is Peptide deformylase (136 aa).

2 residues coordinate Fe cation: cysteine 85 and histidine 126. The active site involves glutamate 127. Histidine 130 provides a ligand contact to Fe cation.

It belongs to the polypeptide deformylase family. The cofactor is Fe(2+).

The enzyme catalyses N-terminal N-formyl-L-methionyl-[peptide] + H2O = N-terminal L-methionyl-[peptide] + formate. Functionally, removes the formyl group from the N-terminal Met of newly synthesized proteins. Requires at least a dipeptide for an efficient rate of reaction. N-terminal L-methionine is a prerequisite for activity but the enzyme has broad specificity at other positions. The polypeptide is Peptide deformylase (Clostridium beijerinckii (strain ATCC 51743 / NCIMB 8052) (Clostridium acetobutylicum)).